A 594-amino-acid polypeptide reads, in one-letter code: Probable Xaa-Pro aminopeptidase P (594 aa).

Residues Asp-391, Asp-402, Glu-500, and Glu-514 each coordinate Mn(2+).

The protein belongs to the peptidase M24B family. Mn(2+) serves as cofactor.

It catalyses the reaction Release of any N-terminal amino acid, including proline, that is linked to proline, even from a dipeptide or tripeptide.. Functionally, catalyzes the removal of a penultimate prolyl residue from the N-termini of peptides. The protein is Probable Xaa-Pro aminopeptidase P (ampp) of Pyrenophora tritici-repentis (strain Pt-1C-BFP) (Wheat tan spot fungus).